Here is a 213-residue protein sequence, read N- to C-terminus: 3-dehydroquinate dehydratase (213 aa).

Residues 27 to 29 and arginine 53 contribute to the 3-dehydroquinate site; that span reads EVR. Catalysis depends on histidine 111, which acts as the Proton donor/acceptor. The active-site Schiff-base intermediate with substrate is the lysine 138. Arginine 175 and glutamine 197 together coordinate 3-dehydroquinate.

This sequence belongs to the type-I 3-dehydroquinase family. In terms of assembly, homodimer.

The catalysed reaction is 3-dehydroquinate = 3-dehydroshikimate + H2O. The protein operates within metabolic intermediate biosynthesis; chorismate biosynthesis; chorismate from D-erythrose 4-phosphate and phosphoenolpyruvate: step 3/7. Involved in the third step of the chorismate pathway, which leads to the biosynthesis of aromatic amino acids. Catalyzes the cis-dehydration of 3-dehydroquinate (DHQ) and introduces the first double bond of the aromatic ring to yield 3-dehydroshikimate. The chain is 3-dehydroquinate dehydratase from Thermococcus gammatolerans (strain DSM 15229 / JCM 11827 / EJ3).